A 62-amino-acid chain; its full sequence is MAVPKRKTSPSRRGMRRSADALKQPTYVEDKDSGELRRPHHLDLKTGMYRGRQILKPKTAEV.

Residues 1–16 show a composition bias toward basic residues; sequence MAVPKRKTSPSRRGMR. The disordered stretch occupies residues 1-62; it reads MAVPKRKTSP…QILKPKTAEV (62 aa). Residues 28–44 are compositionally biased toward basic and acidic residues; the sequence is VEDKDSGELRRPHHLDL.

This sequence belongs to the bacterial ribosomal protein bL32 family.

The sequence is that of Large ribosomal subunit protein bL32 from Azorhizobium caulinodans (strain ATCC 43989 / DSM 5975 / JCM 20966 / LMG 6465 / NBRC 14845 / NCIMB 13405 / ORS 571).